The chain runs to 493 residues: Mitochondrial distribution and morphology protein 10 (493 aa).

Belongs to the MDM10 family. Component of the ER-mitochondria encounter structure (ERMES) or MDM complex, composed of MMM1, MDM10, MDM12 and MDM34. Associates with the mitochondrial outer membrane sorting assembly machinery SAM(core) complex, which consists of SAM35, SAM37 and SAM50, to form a SAM(holo) complex.

It localises to the mitochondrion outer membrane. Component of the ERMES/MDM complex, which serves as a molecular tether to connect the endoplasmic reticulum and mitochondria. Components of this complex are involved in the control of mitochondrial shape and protein biogenesis and may function in phospholipid exchange. MDM10 is involved in the late assembly steps of the general translocase of the mitochondrial outer membrane (TOM complex). Functions in the TOM40-specific route of the assembly of outer membrane beta-barrel proteins, including the association of TOM40 with the receptor TOM22 and small TOM proteins. Can associate with the SAM(core) complex as well as the MDM12-MMM1 complex, both involved in late steps of the major beta-barrel assembly pathway, that is responsible for biogenesis of all outer membrane beta-barrel proteins. May act as a switch that shuttles between both complexes and channels precursor proteins into the TOM40-specific pathway. Plays a role in mitochondrial morphology and in the inheritance of mitochondria. The protein is Mitochondrial distribution and morphology protein 10 of Saccharomyces cerevisiae (strain ATCC 204508 / S288c) (Baker's yeast).